A 484-amino-acid chain; its full sequence is PTS system N-acetylmuramic acid-specific EIIBC component (484 aa).

Residues 1 to 89 (MAKITTSMIQ…NEMMEGEEDN (89 aa)) enclose the PTS EIIB type-1 domain. The active-site Phosphocysteine intermediate; for EIIB activity is the C28. A disordered region spans residues 83–106 (MEGEEDNSASTTAESRDLKDVASE). A compositionally biased stretch (basic and acidic residues) spans 96 to 106 (ESRDLKDVASE). The 361-residue stretch at 124–484 (SKFATIFTPL…FFGTKNVDLS (361 aa)) folds into the PTS EIIC type-1 domain. 10 helical membrane-spanning segments follow: residues 126–146 (FATI…LLGF), 168–188 (LILY…ILIG), 194–214 (AFGG…LGYN), 232–252 (GIDP…GAGV), 273–293 (TLLI…GVLF), 312–332 (ILAG…FVPV), 345–365 (LFPI…ALYA), 379–399 (GSII…VTLP), 404–424 (FITA…VSYM), and 451–471 (IFAG…AGFL).

It localises to the cell inner membrane. It catalyses the reaction N-acetyl-beta-D-muramate(out) + N(pros)-phospho-L-histidyl-[protein] = N-acetyl-beta-D-muramate 6-phosphate(in) + L-histidyl-[protein]. The phosphoenolpyruvate-dependent sugar phosphotransferase system (sugar PTS), a major carbohydrate active transport system, catalyzes the phosphorylation of incoming sugar substrates concomitantly with their translocation across the cell membrane. This system is involved in N-acetylmuramic acid (MurNAc) transport, yielding cytoplasmic MurNAc-6-P. Is also able to take up anhydro-N-acetylmuramic acid (anhMurNAc), but cannot phosphorylate the carbon 6, probably because of the 1,6-anhydro ring. In Aliivibrio fischeri (strain ATCC 700601 / ES114) (Vibrio fischeri), this protein is PTS system N-acetylmuramic acid-specific EIIBC component (murP).